We begin with the raw amino-acid sequence, 205 residues long: Anaerobic dimethyl sulfoxide reductase chain B (205 aa).

4Fe-4S ferredoxin-type domains lie at 5–33 (YGFF…LTPE), 59–89 (FAYY…KRED), and 90–119 (GFVV…YNET). The [4Fe-4S] cluster site is built by cysteine 14, cysteine 17, cysteine 20, cysteine 24, cysteine 67, cysteine 70, cysteine 75, cysteine 79, cysteine 99, cysteine 102, cysteine 105, cysteine 109, cysteine 126, cysteine 129, cysteine 141, and cysteine 145. Residues 184 to 205 (KPNANSRPTGDTTGYLANPKEV) form a disordered region. A compositionally biased stretch (polar residues) spans 186–195 (NANSRPTGDT).

As to quaternary structure, heterotrimeric enzyme composed of a catalytic heterodimer (DmsAB) and a membrane anchor protein (DmsC). [4Fe-4S] cluster serves as cofactor.

Electron transfer subunit of the terminal reductase during anaerobic growth on various sulfoxide and N-oxide compounds. The sequence is that of Anaerobic dimethyl sulfoxide reductase chain B (dmsB) from Shigella flexneri.